We begin with the raw amino-acid sequence, 481 residues long: Histidine--tRNA ligase, cytoplasmic (481 aa).

A disordered region spans residues Met-1–Tyr-48. Over residues Lys-12 to Glu-31 the composition is skewed to basic and acidic residues.

The protein belongs to the class-II aminoacyl-tRNA synthetase family.

It is found in the cytoplasm. The enzyme catalyses tRNA(His) + L-histidine + ATP = L-histidyl-tRNA(His) + AMP + diphosphate + H(+). The protein is Histidine--tRNA ligase, cytoplasmic (hisS) of Dictyostelium discoideum (Social amoeba).